The chain runs to 299 residues: Protease HtpX homolog (299 aa).

The next 2 membrane-spanning stretches (helical) occupy residues 14–34 and 39–59; these read IVLL…VGYL and LVGG…SMIF. H143 is a Zn(2+) binding site. Residue E144 is part of the active site. H147 contacts Zn(2+). 2 consecutive transmembrane segments (helical) span residues 158–178 and 198–218; these read IAVA…RMMW and IILL…ASLV. Position 227 (E227) interacts with Zn(2+).

This sequence belongs to the peptidase M48B family. It depends on Zn(2+) as a cofactor.

It is found in the cell membrane. This is Protease HtpX homolog from Streptococcus mutans serotype c (strain ATCC 700610 / UA159).